A 723-amino-acid chain; its full sequence is MMQRRSPPKHRHDGTSPLPLGMDWSPPPRKWNGRDTVWPHDPRTGWSYCVTIPSWIVLPKSRNSDPVVFYRVQVSVQSPEGITTMRGVLRRFNDFLKLLTDLKRTFPRKGFPSAPPKGLLRMKSRAVLEERRCSLEEWITKLLSDIELARSVVVASFLELEAAARSACQDVDQNASDSNNDRSSTSSSPMVHPSLSLFHAGGSTLTSDYGSDTAYETSEVGSPSVGQDDISEIGTEDLTLDEDLTLTNPIEKLVNFSMSNIDEGLSMSETILEQLEDFPKHKVRSRYVNNILGKDVYNGNASKGVFLANNGSRLLSEPEPSTHSVMHDRNDSAERFALHTGQTSTSGLLISSRDSHLDLRQGPGVSLGTGLVCNPERQGSAQIVLPLELRNKLNRILLATNERLVNAKTDMEDLIARLNQEIAVKDYLNKKVNDLEGELETTKQRSKENLEQAIMSERERFNQMQWDMEELRQKSYEMEMKLKSREDGSSHAEPTVQSTISEKHVLSKELDARKQQLEDLSRRYEELEAKSKADMKVLVKEVKSLRRSHVELEKELTHSLTDKTNAEKLLQEERKLLENTVAARKKLLSDCRILHDRLKEYNLNLSMDGNGNFVDDSTTISDVLRLLSISDDQIEEAQLLSGFDENAAAEDIDKTLSMDTETRIMEDELRKILANIFVENAKLRKQVNSAMLRALQKDVKTTEDVNEENSDEKDEASRETLKR.

A compositionally biased stretch (basic residues) spans 1–12; the sequence is MMQRRSPPKHRH. The disordered stretch occupies residues 1-26; it reads MMQRRSPPKHRHDGTSPLPLGMDWSP. The PX domain maps to 48 to 165; it reads YCVTIPSWIV…SFLELEAAAR (118 aa). Disordered regions lie at residues 169 to 193 and 209 to 230; these read QDVDQNASDSNNDRSSTSSSPMVHP and YGSDTAYETSEVGSPSVGQDDI. Positions 172–193 are enriched in low complexity; it reads DQNASDSNNDRSSTSSSPMVHP. Over residues 209 to 225 the composition is skewed to polar residues; the sequence is YGSDTAYETSEVGSPSV. 2 coiled-coil regions span residues 401–474 and 503–555; these read NERL…LRQK and KHVL…LEKE. Positions 698 to 723 are disordered; it reads DVKTTEDVNEENSDEKDEASRETLKR. Over residues 704–714 the composition is skewed to acidic residues; the sequence is DVNEENSDEKD.

The protein localises to the cytoplasm. It localises to the cytosol. It is found in the endosome membrane. Acts as an effector of RABF2A and RABF2B. Involved in vacuolar transport of storage proteins. Regulates membrane trafficking to protein storage vacuoles (PSVs). Binds specifically to phosphatidylinositol 3-monophosphate (PtdIns3P). The chain is PX domain-containing protein EREL1 from Arabidopsis thaliana (Mouse-ear cress).